The primary structure comprises 263 residues: Non-homologous end joining protein Ku 3 (263 aa).

Residues 6-169 (FGLVSVPVQL…WADEVRDPHR (164 aa)) form the Ku domain.

Belongs to the prokaryotic Ku family. As to quaternary structure, homodimer. Interacts with LigD.

Functionally, with LigD forms a non-homologous end joining (NHEJ) DNA repair enzyme, which repairs dsDNA breaks with reduced fidelity. Binds linear dsDNA with 5'- and 3'- overhangs but not closed circular dsDNA nor ssDNA. Recruits and stimulates the ligase activity of LigD. The polypeptide is Non-homologous end joining protein Ku 3 (Saccharopolyspora erythraea (strain ATCC 11635 / DSM 40517 / JCM 4748 / NBRC 13426 / NCIMB 8594 / NRRL 2338)).